Here is a 340-residue protein sequence, read N- to C-terminus: CMP-sialic acid transporter 1 (340 aa).

Residues 1–5 (MAATP) lie on the Cytoplasmic side of the membrane. The chain crosses the membrane as a helical span at residues 6–26 (WYFVAVLLTILTSSQGILTTL). Residues 27–36 (SQSDGGYKYD) lie on the Lumenal side of the membrane. Residues 37 to 57 (YATVPFLAEVFKLIISGLFLW) traverse the membrane as a helical segment. Topologically, residues 58–78 (REMRTSSSTTSRITTDWKSVR) are cytoplasmic. A helical membrane pass occupies residues 79 to 99 (LFVIPSLIYLIHNNVQFATLT). Residues 100 to 102 (YVD) lie on the Lumenal side of the membrane. The helical transmembrane segment at 103–125 (TSTYQIMGNLKIVTTGILFRLFL) threads the bilayer. The Cytoplasmic portion of the chain corresponds to 126-168 (KRKLSKLQWMAIGLLAVGTTTSQVKGCGEASCDSLFTAPIQGY). The helical transmembrane segment at 169–189 (LLGILSAGLSALAGIYTEFLM) threads the bilayer. At 190-200 (KRNNDTLYWQN) the chain is on the lumenal side. Residues 201 to 217 (LQLYTFGSLFNVARLIA) form a helical membrane-spanning segment. The Cytoplasmic portion of the chain corresponds to 218–238 (DDFRHGFEKGPWWQRIFDGYS). Residues 239 to 259 (ITTWLVVLNLGSTGLLVSWLM) form a helical membrane-spanning segment. Residues 260 to 282 (KYADNIVKVYSTSMAMLLTMVAS) lie on the Lumenal side of the membrane. Residues 283 to 303 (IYLFSFKPTLQLFLGIVICIM) form a helical membrane-spanning segment. Over 304–340 (SLHMYFAPPHTLVDLPVTNEAHAKTLKQVVVEEKTDS) the chain is Cytoplasmic.

The protein belongs to the nucleotide-sugar transporter family. CMP-Sialate:CMP antiporter (TC 2.A.7.12) subfamily.

Its subcellular location is the golgi apparatus membrane. Its function is as follows. Essential protein. Sugar transporter involved in the transport of CMP-sialic acid from the cytoplasm into the Golgi. This is CMP-sialic acid transporter 1 from Arabidopsis thaliana (Mouse-ear cress).